A 273-amino-acid chain; its full sequence is Dermonecrotic toxin LapSicTox-alphaIB1ai (273 aa).

The active site involves H5. The Mg(2+) site is built by E25 and D27. H41 functions as the Nucleophile in the catalytic mechanism. 2 disulfides stabilise this stretch: C45-C51 and C47-C190. D85 is a Mg(2+) binding site. An N-linked (GlcNAc...) asparagine glycan is attached at N250.

The protein belongs to the arthropod phospholipase D family. Class II subfamily. Requires Mg(2+) as cofactor. In terms of tissue distribution, expressed by the venom gland.

The protein resides in the secreted. The enzyme catalyses an N-(acyl)-sphingosylphosphocholine = an N-(acyl)-sphingosyl-1,3-cyclic phosphate + choline. It catalyses the reaction an N-(acyl)-sphingosylphosphoethanolamine = an N-(acyl)-sphingosyl-1,3-cyclic phosphate + ethanolamine. The catalysed reaction is a 1-acyl-sn-glycero-3-phosphocholine = a 1-acyl-sn-glycero-2,3-cyclic phosphate + choline. It carries out the reaction a 1-acyl-sn-glycero-3-phosphoethanolamine = a 1-acyl-sn-glycero-2,3-cyclic phosphate + ethanolamine. Dermonecrotic toxins cleave the phosphodiester linkage between the phosphate and headgroup of certain phospholipids (sphingolipid and lysolipid substrates), forming an alcohol (often choline) and a cyclic phosphate. This toxin acts on sphingomyelin (SM). It may also act on ceramide phosphoethanolamine (CPE), lysophosphatidylcholine (LPC) and lysophosphatidylethanolamine (LPE), but not on lysophosphatidylserine (LPS), and lysophosphatidylglycerol (LPG). It acts by transphosphatidylation, releasing exclusively cyclic phosphate products as second products. Induces dermonecrosis, hemolysis, increased vascular permeability, edema, inflammatory response, and platelet aggregation. The protein is Dermonecrotic toxin LapSicTox-alphaIB1ai of Loxosceles apachea (Apache recluse spider).